Reading from the N-terminus, the 204-residue chain is LexA repressor (204 aa).

Residues 27–47 (VREIGEAVGLASSSTVHGHLA) constitute a DNA-binding region (H-T-H motif). Residues Ser-126 and Lys-164 each act as for autocatalytic cleavage activity in the active site.

Belongs to the peptidase S24 family. Homodimer.

The enzyme catalyses Hydrolysis of Ala-|-Gly bond in repressor LexA.. Represses a number of genes involved in the response to DNA damage (SOS response), including recA and lexA. In the presence of single-stranded DNA, RecA interacts with LexA causing an autocatalytic cleavage which disrupts the DNA-binding part of LexA, leading to derepression of the SOS regulon and eventually DNA repair. The protein is LexA repressor of Listeria welshimeri serovar 6b (strain ATCC 35897 / DSM 20650 / CCUG 15529 / CIP 8149 / NCTC 11857 / SLCC 5334 / V8).